The primary structure comprises 356 residues: sn-glycerol-3-phosphate import ATP-binding protein UgpC (356 aa).

In terms of domain architecture, ABC transporter spans 4–235 (LKLQAVTKSW…PASLFVASFI (232 aa)). 37–44 (GPSGCGKS) is an ATP binding site.

Belongs to the ABC transporter superfamily. sn-glycerol-3-phosphate importer (TC 3.A.1.1.3) family. In terms of assembly, the complex is composed of two ATP-binding proteins (UgpC), two transmembrane proteins (UgpA and UgpE) and a solute-binding protein (UgpB).

It localises to the cell inner membrane. The catalysed reaction is sn-glycerol 3-phosphate(out) + ATP + H2O = sn-glycerol 3-phosphate(in) + ADP + phosphate + H(+). In terms of biological role, part of the ABC transporter complex UgpBAEC involved in sn-glycerol-3-phosphate (G3P) import. Responsible for energy coupling to the transport system. The sequence is that of sn-glycerol-3-phosphate import ATP-binding protein UgpC from Escherichia coli O157:H7.